Here is a 94-residue protein sequence, read N- to C-terminus: Large ribosomal subunit protein bL27 (94 aa).

Residues 1 to 9 (MLELNLQLF) constitute a propeptide that is removed on maturation. Residues 12 to 33 (KKGGGSTSNGRDSQAKRLGAKA) form a disordered region.

This sequence belongs to the bacterial ribosomal protein bL27 family. Post-translationally, the N-terminus is cleaved by ribosomal processing cysteine protease Prp.

The polypeptide is Large ribosomal subunit protein bL27 (Lactococcus lactis subsp. cremoris (strain MG1363)).